The following is a 165-amino-acid chain: Shikimate kinase (165 aa).

An ATP-binding site is contributed by 11-16 (GAGKTT). T15 lines the Mg(2+) pocket. D33, R57, and G78 together coordinate substrate. R116 contacts ATP. R134 lines the substrate pocket.

Belongs to the shikimate kinase family. As to quaternary structure, monomer. Requires Mg(2+) as cofactor.

The protein resides in the cytoplasm. The catalysed reaction is shikimate + ATP = 3-phosphoshikimate + ADP + H(+). It participates in metabolic intermediate biosynthesis; chorismate biosynthesis; chorismate from D-erythrose 4-phosphate and phosphoenolpyruvate: step 5/7. Catalyzes the specific phosphorylation of the 3-hydroxyl group of shikimic acid using ATP as a cosubstrate. This chain is Shikimate kinase, found in Bacillus anthracis (strain A0248).